The sequence spans 159 residues: U1 small nuclear ribonucleoprotein C (159 aa).

A Matrin-type zinc finger spans residues 4–36 (FYCDYCDTYLTHDSPSVRKTHCSGRKHKENVKD). A Phosphotyrosine modification is found at tyrosine 8. Position 17 is a phosphoserine (serine 17). Lysine 52 bears the N6-acetyllysine mark. 2 disordered regions span residues 62–96 (IPPT…PAPH) and 140–159 (RPPA…RPDR). Residues 63 to 92 (PPTPFSAPPPAGAMIPPPPSLPGPPRPGMM) show a composition bias toward pro residues.

This sequence belongs to the U1 small nuclear ribonucleoprotein C family. In terms of assembly, component of the U1 snRNP. The U1 snRNP is composed of the U1 snRNA and the 7 core Sm proteins SNRPB, SNRPD1, SNRPD2, SNRPD3, SNRPE, SNRPF and SNRPG that assemble in a heptameric protein ring on the Sm site of the small nuclear RNA to form the core snRNP, and at least 3 U1 snRNP-specific proteins SNRNP70/U1-70K, SNRPA/U1-A and SNRPC/U1-C. SNRPC/U1-C interacts with U1 snRNA and the 5' splice-site region of the pre-mRNA. Interacts (via N-terminus) with TIA1 (via C-terminus); thereby promoting spliceosomal U1 snRNP recruitment to 5' splice sites.

Its subcellular location is the nucleus. Its function is as follows. Component of the spliceosomal U1 snRNP, which is essential for recognition of the pre-mRNA 5' splice-site and the subsequent assembly of the spliceosome. SNRPC/U1-C is directly involved in initial 5' splice-site recognition for both constitutive and regulated alternative splicing. The interaction with the 5' splice-site seems to precede base-pairing between the pre-mRNA and the U1 snRNA. Stimulates commitment or early (E) complex formation by stabilizing the base pairing of the 5' end of the U1 snRNA and the 5' splice-site region. In Homo sapiens (Human), this protein is U1 small nuclear ribonucleoprotein C.